The chain runs to 259 residues: UPF0246 protein ABBFA_001173 (259 aa).

The protein belongs to the UPF0246 family.

This is UPF0246 protein ABBFA_001173 from Acinetobacter baumannii (strain AB307-0294).